Here is a 372-residue protein sequence, read N- to C-terminus: Glutamate 5-kinase (372 aa).

Lys14 is an ATP binding site. Residues Ser54, Asp141, and Asn153 each contribute to the substrate site. 173–174 (TD) is a binding site for ATP. A PUA domain is found at 280–358 (AGAVVLDNGA…ADIAAILGFV (79 aa)).

It belongs to the glutamate 5-kinase family.

The protein resides in the cytoplasm. The catalysed reaction is L-glutamate + ATP = L-glutamyl 5-phosphate + ADP. It participates in amino-acid biosynthesis; L-proline biosynthesis; L-glutamate 5-semialdehyde from L-glutamate: step 1/2. Catalyzes the transfer of a phosphate group to glutamate to form L-glutamate 5-phosphate. The chain is Glutamate 5-kinase from Janthinobacterium sp. (strain Marseille) (Minibacterium massiliensis).